Here is a 174-residue protein sequence, read N- to C-terminus: Large ribosomal subunit protein uL10 (174 aa).

Belongs to the universal ribosomal protein uL10 family. As to quaternary structure, part of the ribosomal stalk of the 50S ribosomal subunit. The N-terminus interacts with L11 and the large rRNA to form the base of the stalk. The C-terminus forms an elongated spine to which L12 dimers bind in a sequential fashion forming a multimeric L10(L12)X complex.

In terms of biological role, forms part of the ribosomal stalk, playing a central role in the interaction of the ribosome with GTP-bound translation factors. This Anaeromyxobacter sp. (strain K) protein is Large ribosomal subunit protein uL10.